Consider the following 518-residue polypeptide: D-aminopeptidase (518 aa).

Catalysis depends on S62, which acts as the Nucleophile. The active-site Proton donor/acceptor is K65. The important for specificity stretch occupies residues 477-487 (QRSMDAPSPGE). A substrate-binding site is contributed by D481.

Belongs to the peptidase S12 family. As to quaternary structure, homodimer.

The enzyme catalyses Release of an N-terminal D-amino acid from a peptide, Xaa-|-Yaa-, in which Xaa is preferably D-Ala, D-Ser or D-Thr. D-amino acid amides and methyl esters also are hydrolyzed, as is glycine amide.. With respect to regulation, inhibited by beta-lactam compounds such as 6-aminopenicillic acid, 7-aminocephalosporanic acid, benzylpenicillin and ampicillin. Inhibited by p-chloromercuribenzoate. Hydrolyzes N-terminal residues in D-amino acid-containing peptides. The sequence is that of D-aminopeptidase from Brucella ovis (strain ATCC 25840 / 63/290 / NCTC 10512).